The sequence spans 588 residues: Aspartate--tRNA ligase (588 aa).

Glu172 is a binding site for L-aspartate. Residues 196–199 form an aspartate region; sequence QLFK. Position 218 (Arg218) interacts with L-aspartate. ATP is bound by residues 218–220 and Gln227; that span reads RDE. His449 serves as a coordination point for L-aspartate. Glu483 provides a ligand contact to ATP. Arg490 is a binding site for L-aspartate. An ATP-binding site is contributed by 535 to 538; that stretch reads GLDR.

Belongs to the class-II aminoacyl-tRNA synthetase family. Type 1 subfamily. As to quaternary structure, homodimer.

It localises to the cytoplasm. The enzyme catalyses tRNA(Asp) + L-aspartate + ATP = L-aspartyl-tRNA(Asp) + AMP + diphosphate. Catalyzes the attachment of L-aspartate to tRNA(Asp) in a two-step reaction: L-aspartate is first activated by ATP to form Asp-AMP and then transferred to the acceptor end of tRNA(Asp). This chain is Aspartate--tRNA ligase, found in Haemophilus influenzae (strain 86-028NP).